The following is a 100-amino-acid chain: Aspartyl/glutamyl-tRNA(Asn/Gln) amidotransferase subunit C (100 aa).

This sequence belongs to the GatC family. In terms of assembly, heterotrimer of A, B and C subunits.

It catalyses the reaction L-glutamyl-tRNA(Gln) + L-glutamine + ATP + H2O = L-glutaminyl-tRNA(Gln) + L-glutamate + ADP + phosphate + H(+). The catalysed reaction is L-aspartyl-tRNA(Asn) + L-glutamine + ATP + H2O = L-asparaginyl-tRNA(Asn) + L-glutamate + ADP + phosphate + 2 H(+). Its function is as follows. Allows the formation of correctly charged Asn-tRNA(Asn) or Gln-tRNA(Gln) through the transamidation of misacylated Asp-tRNA(Asn) or Glu-tRNA(Gln) in organisms which lack either or both of asparaginyl-tRNA or glutaminyl-tRNA synthetases. The reaction takes place in the presence of glutamine and ATP through an activated phospho-Asp-tRNA(Asn) or phospho-Glu-tRNA(Gln). This chain is Aspartyl/glutamyl-tRNA(Asn/Gln) amidotransferase subunit C, found in Rickettsia canadensis (strain McKiel).